A 430-amino-acid polypeptide reads, in one-letter code: Asparagine--tRNA ligase (430 aa).

Belongs to the class-II aminoacyl-tRNA synthetase family. In terms of assembly, homodimer.

It is found in the cytoplasm. The catalysed reaction is tRNA(Asn) + L-asparagine + ATP = L-asparaginyl-tRNA(Asn) + AMP + diphosphate + H(+). This is Asparagine--tRNA ligase from Staphylococcus aureus (strain USA300).